The chain runs to 67 residues: Conotoxin LeDr192 (67 aa).

The first 19 residues, Met1 to Cys19, serve as a signal peptide directing secretion. A propeptide spanning residues Phe20–Ile49 is cleaved from the precursor. Threonine amide is present on Thr65.

The protein belongs to the conotoxin T superfamily. Contains 2 disulfide bonds that can be either 'C1-C3, C2-C4' or 'C1-C4, C2-C3', since these disulfide connectivities have been observed for conotoxins with cysteine framework V (for examples, see AC P0DQQ7 and AC P81755). In terms of tissue distribution, expressed by the venom duct.

The protein localises to the secreted. This chain is Conotoxin LeDr192, found in Conus litteratus (Lettered cone).